The sequence spans 449 residues: Glucose-6-phosphate isomerase (449 aa).

The Proton donor role is filled by Glu-291. Active-site residues include His-312 and Lys-426.

It belongs to the GPI family.

It is found in the cytoplasm. It catalyses the reaction alpha-D-glucose 6-phosphate = beta-D-fructose 6-phosphate. Its pathway is carbohydrate biosynthesis; gluconeogenesis. It participates in carbohydrate degradation; glycolysis; D-glyceraldehyde 3-phosphate and glycerone phosphate from D-glucose: step 2/4. Catalyzes the reversible isomerization of glucose-6-phosphate to fructose-6-phosphate. This Streptococcus pyogenes serotype M2 (strain MGAS10270) protein is Glucose-6-phosphate isomerase.